The sequence spans 319 residues: Cytochrome c biogenesis protein CcsA (319 aa).

The next 7 membrane-spanning stretches (helical) occupy residues 9–29 (ILTH…LITL), 44–64 (GVIG…AYSG), 71–91 (LYES…FPYF), 143–163 (MVLG…LLVI), 225–245 (IISL…VWAN), 259–273 (TWAF…IYLH), and 286–306 (AIVA…VNLL).

This sequence belongs to the CcmF/CycK/Ccl1/NrfE/CcsA family. As to quaternary structure, may interact with Ccs1.

Its subcellular location is the plastid. It localises to the chloroplast thylakoid membrane. Required during biogenesis of c-type cytochromes (cytochrome c6 and cytochrome f) at the step of heme attachment. The chain is Cytochrome c biogenesis protein CcsA from Oenothera glazioviana (Large-flowered evening primrose).